The chain runs to 324 residues: Annexin A10 (324 aa).

4 Annexin repeats span residues phenylalanine 17–tyrosine 88, proline 89–glutamine 160, alanine 171–arginine 243, and aspartate 247–alanine 318.

It belongs to the annexin family.

This chain is Annexin A10 (Anxa10), found in Mus musculus (Mouse).